The primary structure comprises 227 residues: 7-cyano-7-deazaguanine synthase (227 aa).

16-26 (FSGGQDSTTCL) lines the ATP pocket. Cys194, Cys202, Cys205, and Cys208 together coordinate Zn(2+).

It belongs to the QueC family. Requires Zn(2+) as cofactor.

The enzyme catalyses 7-carboxy-7-deazaguanine + NH4(+) + ATP = 7-cyano-7-deazaguanine + ADP + phosphate + H2O + H(+). The protein operates within purine metabolism; 7-cyano-7-deazaguanine biosynthesis. In terms of biological role, catalyzes the ATP-dependent conversion of 7-carboxy-7-deazaguanine (CDG) to 7-cyano-7-deazaguanine (preQ(0)). This chain is 7-cyano-7-deazaguanine synthase, found in Haemophilus influenzae (strain PittEE).